The chain runs to 148 residues: MKVILLQDVKGLGKKGEVVNASDGYARNFLFPKKLAAEATQGNVKTLNEQKTSQELKKQQEVEEAKELAKKIENSPIEIIAKAGDGGRLFGSVTSKDLAETLEKQHHIKIDKRKITLPEPIRELGVRHVEIKLHVGVVGKLTVNIKEA.

It belongs to the bacterial ribosomal protein bL9 family.

Functionally, binds to the 23S rRNA. In Alkaliphilus oremlandii (strain OhILAs) (Clostridium oremlandii (strain OhILAs)), this protein is Large ribosomal subunit protein bL9.